The chain runs to 295 residues: Protease HtpX (295 aa).

Helical transmembrane passes span 4–24 (IVLF…ILSL) and 34–54 (GLMI…LLMS). Residue H139 coordinates Zn(2+). E140 is a catalytic residue. H143 contacts Zn(2+). Helical transmembrane passes span 147-167 (GDMV…IFIS) and 194-214 (IVYM…ASII). E223 provides a ligand contact to Zn(2+).

It belongs to the peptidase M48B family. It depends on Zn(2+) as a cofactor.

It is found in the cell inner membrane. This Photorhabdus laumondii subsp. laumondii (strain DSM 15139 / CIP 105565 / TT01) (Photorhabdus luminescens subsp. laumondii) protein is Protease HtpX.